Reading from the N-terminus, the 206-residue chain is Outer-membrane lipoprotein carrier protein (206 aa).

The signal sequence occupies residues 1–20; the sequence is MRLIRMLLPVLALTTLTAHA.

It belongs to the LolA family. As to quaternary structure, monomer.

It localises to the periplasm. Participates in the translocation of lipoproteins from the inner membrane to the outer membrane. Only forms a complex with a lipoprotein if the residue after the N-terminal Cys is not an aspartate (The Asp acts as a targeting signal to indicate that the lipoprotein should stay in the inner membrane). This Pseudomonas fluorescens (strain Pf0-1) protein is Outer-membrane lipoprotein carrier protein.